Here is a 98-residue protein sequence, read N- to C-terminus: NADH-ubiquinone oxidoreductase chain 4L (98 aa).

The next 3 membrane-spanning stretches (helical) occupy residues 1–21 (MSLT…GLLM), 29–49 (SLLC…MTIL), and 61–81 (IILL…LVMV).

It belongs to the complex I subunit 4L family. Core subunit of respiratory chain NADH dehydrogenase (Complex I) which is composed of 45 different subunits.

It localises to the mitochondrion inner membrane. It carries out the reaction a ubiquinone + NADH + 5 H(+)(in) = a ubiquinol + NAD(+) + 4 H(+)(out). In terms of biological role, core subunit of the mitochondrial membrane respiratory chain NADH dehydrogenase (Complex I) which catalyzes electron transfer from NADH through the respiratory chain, using ubiquinone as an electron acceptor. Part of the enzyme membrane arm which is embedded in the lipid bilayer and involved in proton translocation. This chain is NADH-ubiquinone oxidoreductase chain 4L (MT-ND4L), found in Vampyressa brocki (Brock's yellow-eared bat).